A 683-amino-acid chain; its full sequence is UvrABC system protein B (683 aa).

The interval Met-1–Asp-29 is disordered. A Helicase ATP-binding domain is found at Ala-39–Glu-417. Gly-52 to Thr-59 contributes to the ATP binding site. The Beta-hairpin motif lies at Tyr-105 to Ile-128. One can recognise a Helicase C-terminal domain in the interval Gln-442 to Ser-604. Residues Glu-587 to Val-603 are compositionally biased toward basic and acidic residues. The tract at residues Glu-587–Asp-620 is disordered. Residues Ser-604–Thr-615 show a composition bias toward polar residues. The 36-residue stretch at Glu-630–Thr-665 folds into the UVR domain.

Belongs to the UvrB family. Forms a heterotetramer with UvrA during the search for lesions. Interacts with UvrC in an incision complex.

It localises to the cytoplasm. The UvrABC repair system catalyzes the recognition and processing of DNA lesions. A damage recognition complex composed of 2 UvrA and 2 UvrB subunits scans DNA for abnormalities. Upon binding of the UvrA(2)B(2) complex to a putative damaged site, the DNA wraps around one UvrB monomer. DNA wrap is dependent on ATP binding by UvrB and probably causes local melting of the DNA helix, facilitating insertion of UvrB beta-hairpin between the DNA strands. Then UvrB probes one DNA strand for the presence of a lesion. If a lesion is found the UvrA subunits dissociate and the UvrB-DNA preincision complex is formed. This complex is subsequently bound by UvrC and the second UvrB is released. If no lesion is found, the DNA wraps around the other UvrB subunit that will check the other stand for damage. This chain is UvrABC system protein B, found in Natronomonas pharaonis (strain ATCC 35678 / DSM 2160 / CIP 103997 / JCM 8858 / NBRC 14720 / NCIMB 2260 / Gabara) (Halobacterium pharaonis).